A 275-amino-acid chain; its full sequence is Light-independent protochlorophyllide reductase iron-sulfur ATP-binding protein (275 aa).

ATP contacts are provided by residues 12–17 (GIGKST) and Lys-41. Ser-16 serves as a coordination point for Mg(2+). [4Fe-4S] cluster contacts are provided by Cys-97 and Cys-131. 182–183 (NR) lines the ATP pocket.

Belongs to the NifH/BchL/ChlL family. As to quaternary structure, homodimer. Protochlorophyllide reductase is composed of three subunits; BchL, BchN and BchB. The cofactor is [4Fe-4S] cluster.

The catalysed reaction is chlorophyllide a + oxidized 2[4Fe-4S]-[ferredoxin] + 2 ADP + 2 phosphate = protochlorophyllide a + reduced 2[4Fe-4S]-[ferredoxin] + 2 ATP + 2 H2O. Its pathway is porphyrin-containing compound metabolism; bacteriochlorophyll biosynthesis (light-independent). Its function is as follows. Component of the dark-operative protochlorophyllide reductase (DPOR) that uses Mg-ATP and reduced ferredoxin to reduce ring D of protochlorophyllide (Pchlide) to form chlorophyllide a (Chlide). This reaction is light-independent. The L component serves as a unique electron donor to the NB-component of the complex, and binds Mg-ATP. The sequence is that of Light-independent protochlorophyllide reductase iron-sulfur ATP-binding protein from Chlorobium phaeovibrioides (strain DSM 265 / 1930) (Prosthecochloris vibrioformis (strain DSM 265)).